A 213-amino-acid chain; its full sequence is Small ribosomal subunit protein uS3 (213 aa).

In terms of domain architecture, KH type-2 spans 38 to 106 (IRSYIKKLLY…EFSLEVTEVR (69 aa)).

Belongs to the universal ribosomal protein uS3 family. In terms of assembly, part of the 30S ribosomal subunit. Forms a tight complex with proteins S10 and S14.

Functionally, binds the lower part of the 30S subunit head. Binds mRNA in the 70S ribosome, positioning it for translation. In Lawsonia intracellularis (strain PHE/MN1-00), this protein is Small ribosomal subunit protein uS3.